The following is a 61-amino-acid chain: Large ribosomal subunit protein uL30 (61 aa).

The protein belongs to the universal ribosomal protein uL30 family. In terms of assembly, part of the 50S ribosomal subunit.

The protein is Large ribosomal subunit protein uL30 of Nitrosomonas europaea (strain ATCC 19718 / CIP 103999 / KCTC 2705 / NBRC 14298).